The sequence spans 61 residues: Large ribosomal subunit protein uL30 (61 aa).

It belongs to the universal ribosomal protein uL30 family. In terms of assembly, part of the 50S ribosomal subunit.

The chain is Large ribosomal subunit protein uL30 from Bordetella parapertussis (strain 12822 / ATCC BAA-587 / NCTC 13253).